Here is a 676-residue protein sequence, read N- to C-terminus: Heat shock cognate HSP70 protein (676 aa).

The tract at residues 613-676 (SARREGKDGW…RIEAINANTE (64 aa)) is disordered. The segment covering 630–646 (GSGDDNDGDDNSDEEDE) has biased composition (acidic residues).

The protein belongs to the heat shock protein 70 family.

The sequence is that of Heat shock cognate HSP70 protein from Trypanosoma brucei brucei.